A 266-amino-acid chain; its full sequence is Putative carbamate hydrolase RutD (266 aa).

This sequence belongs to the AB hydrolase superfamily. Hydrolase RutD family.

The enzyme catalyses carbamate + 2 H(+) = NH4(+) + CO2. Its function is as follows. Involved in pyrimidine catabolism. May facilitate the hydrolysis of carbamate, a reaction that can also occur spontaneously. The sequence is that of Putative carbamate hydrolase RutD from Escherichia coli O127:H6 (strain E2348/69 / EPEC).